The following is a 486-amino-acid chain: UDP-N-acetylmuramoyl-L-alanyl-D-glutamate--2,6-diaminopimelate ligase (486 aa).

Ser-30 contributes to the UDP-N-acetyl-alpha-D-muramoyl-L-alanyl-D-glutamate binding site. 111–117 (GTNGKTT) contacts ATP. Residues 153–154 (TT), Ser-180, Gln-186, and Arg-188 each bind UDP-N-acetyl-alpha-D-muramoyl-L-alanyl-D-glutamate. An N6-carboxylysine modification is found at Lys-220. Meso-2,6-diaminopimelate contacts are provided by residues Arg-378, 402–405 (DNPR), Gly-455, and Glu-459. The short motif at 402–405 (DNPR) is the Meso-diaminopimelate recognition motif element.

Belongs to the MurCDEF family. MurE subfamily. Requires Mg(2+) as cofactor. Post-translationally, carboxylation is probably crucial for Mg(2+) binding and, consequently, for the gamma-phosphate positioning of ATP.

Its subcellular location is the cytoplasm. The catalysed reaction is UDP-N-acetyl-alpha-D-muramoyl-L-alanyl-D-glutamate + meso-2,6-diaminopimelate + ATP = UDP-N-acetyl-alpha-D-muramoyl-L-alanyl-gamma-D-glutamyl-meso-2,6-diaminopimelate + ADP + phosphate + H(+). The protein operates within cell wall biogenesis; peptidoglycan biosynthesis. Catalyzes the addition of meso-diaminopimelic acid to the nucleotide precursor UDP-N-acetylmuramoyl-L-alanyl-D-glutamate (UMAG) in the biosynthesis of bacterial cell-wall peptidoglycan. The protein is UDP-N-acetylmuramoyl-L-alanyl-D-glutamate--2,6-diaminopimelate ligase of Parabacteroides distasonis (strain ATCC 8503 / DSM 20701 / CIP 104284 / JCM 5825 / NCTC 11152).